Consider the following 462-residue polypeptide: MSEGVDLIDIYADEEFNQDSEFNNTDQIDLYDDVLTAASQPSDDRSSSTEPPPPVRQEPAPKPNNKTPAILYTYSGLRSRRAAVYVGSFSWWTTDQQLIQVIRSIGVYDVVELKFAENRANGQSKGYAEVVVASENSVHKLLELLPGKVLNGEKVDVRPATRQNLSQFEAQARKRIPPRAHSRDSSDSADGRATPSENLVPSSARVDKPPSVLPYFNRPPSALPLMGLPPPPIPPPPPLSSSFGVPPPPPGIHYQHLMPPPPRLPPHLAVPPPGAIPPALHLNPAFFPPPNATVGPPPDTYMKASTPYNHHGSRDSGPLPSTVSEAEFEEIMKRNRAISSSAISKAVSGASAGDYSDAIETLLTAIAVIKQSRVANDERCRVLISSLKDCLHGIEAKSYSVGASGSSSRKRHRSRERSPSRSRESSRRHRDLLHNEDRHDDYFQERNREHERHRDRERDRHH.

2 disordered regions span residues 34-68 (VLTA…NKTP) and 161-213 (TRQN…PSVL). The segment covering 50-62 (EPPPPVRQEPAPK) has biased composition (pro residues). An RRM domain is found at 82 to 162 (AAVYVGSFSW…EKVDVRPATR (81 aa)). A compositionally biased stretch (basic and acidic residues) spans 181–190 (HSRDSSDSAD). Phosphothreonine is present on Thr-194. Ser-196 is subject to Phosphoserine. Residue Lys-345 forms a Glycyl lysine isopeptide (Lys-Gly) (interchain with G-Cter in SUMO2) linkage. The tract at residues 400-462 (SVGASGSSSR…HRDRERDRHH (63 aa)) is disordered. 2 positions are modified to phosphoserine: Ser-404 and Ser-414. Residues 409–460 (RKRHRSRERSPSRSRESSRRHRDLLHNEDRHDDYFQERNREHERHRDRERDR) form an arg/Ser-rich domain region. 2 stretches are compositionally biased toward basic and acidic residues: residues 416-425 (ERSPSRSRES) and 432-462 (LLHN…DRHH).

Belongs to the RRM CPSF6/7 family. As to quaternary structure, component of the cleavage factor Im (CFIm) complex which is a heterotetramer composed of two subunits of NUDT21/CPSF5 and two subunits of CPSF6 or CPSF7 or a heterodimer of CPSF6 and CPSF7. The cleavage factor Im (CFIm) complex associates with the CPSF and CSTF complexes to promote the assembly of the core mRNA 3'-processing machinery. Interacts with NUDT21/CPSF5. Interacts (via Arg/Ser-rich domain) with FIP1L1 (preferentially via unphosphorylated form and Arg/Glu/Asp-rich region); this interaction mediates, at least in part, the interaction between the CFIm and CPSF complexes and may be inhibited by CPSF7 hyper-phosphorylation. Post-translationally, phosphorylated. In terms of processing, asymmetrically dimethylated on arginine residues by PRMT1.

It localises to the nucleus. The protein resides in the cytoplasm. In terms of biological role, component of the cleavage factor Im (CFIm) complex that functions as an activator of the pre-mRNA 3'-end cleavage and polyadenylation processing required for the maturation of pre-mRNA into functional mRNAs. CFIm contributes to the recruitment of multiprotein complexes on specific sequences on the pre-mRNA 3'-end, so called cleavage and polyadenylation signals (pA signals). Most pre-mRNAs contain multiple pA signals, resulting in alternative cleavage and polyadenylation (APA) producing mRNAs with variable 3'-end formation. The CFIm complex acts as a key regulator of cleavage and polyadenylation site choice during APA through its binding to 5'-UGUA-3' elements localized in the 3'-untranslated region (UTR) for a huge number of pre-mRNAs. CPSF7 activates directly the mRNA 3'-processing machinery. Binds to pA signals in RNA substrates. This is Cleavage and polyadenylation specificity factor subunit 7 from Rattus norvegicus (Rat).